The primary structure comprises 607 residues: Guanine nucleotide-binding protein-like 1 (607 aa).

The span at 1 to 14 shows a compositional bias: basic residues; sequence MPRKKPFSVKQKKK. A disordered region spans residues 1 to 81; that stretch reads MPRKKPFSVK…GPRGYDPNRY (81 aa). The span at 15–26 shows a compositional bias: basic and acidic residues; the sequence is QLQDKRERKRGL. 3 positions are modified to phosphoserine: S32, S33, and S34. 2 positions are modified to phosphothreonine: T48 and T50. A phosphoserine mark is found at S51 and S68. The 241-residue stretch at 178 to 418 folds into the CP-type G domain; that stretch reads WRQLWRVLEM…LCDCPGLIFP (241 aa). Residue 225 to 228 participates in GTP binding; the sequence is NKVD. Position 324 is a phosphoserine (S324). GTP-binding positions include 367-374 and 411-415; these read GFPNVGKS and DCPGL. Residues 547 to 607 are disordered; sequence GPAGDEEEEE…PYALLGEDEC (61 aa). The segment covering 550–584 has biased composition (acidic residues); that stretch reads GDEEEEEEEELSSSCEEEGEEDRDADEEGEGDEDT. S561, S562, and S563 each carry phosphoserine.

The protein belongs to the TRAFAC class YlqF/YawG GTPase family.

In terms of biological role, possible regulatory or functional link with the histocompatibility cluster. The chain is Guanine nucleotide-binding protein-like 1 (GNL1) from Macaca fascicularis (Crab-eating macaque).